A 500-amino-acid chain; its full sequence is NAD(P)H-quinone oxidoreductase chain 4, chloroplastic (500 aa).

14 helical membrane passes run 4–24, 35–55, 87–107, 113–130, 134–154, 167–187, 207–227, 242–262, 272–292, 305–325, 330–350, 386–406, 416–436, and 462–482; these read FPWLTIIVVLPIFAGSLIFFL, YTICICMLELLLTTYAFCYHF, LGPVLLTGFITTLATLAAWPV, LFHFLMLAMYSGQIGSFS, LLLFFIMWELELIPVYLLLSM, FILYTAGGSIFLLMGVLGVGL, VALEIIFYIGFLIAFAVKLPI, HYSTCMLLAGILLKMGAYGLI, AHSIFSPWLMVVGTIQIIYAA, IAYSSVSHMGFILIGIASITD, GAILQIISHGFIGAALFFLAG, LALPGMSGFVAEVLVFLGIIT, IAITFVMAIGMILTPIYLLSM, and LFVSISIFIPVIGIGMYPDFV.

It belongs to the complex I subunit 4 family.

Its subcellular location is the plastid. It is found in the chloroplast thylakoid membrane. It carries out the reaction a plastoquinone + NADH + (n+1) H(+)(in) = a plastoquinol + NAD(+) + n H(+)(out). The enzyme catalyses a plastoquinone + NADPH + (n+1) H(+)(in) = a plastoquinol + NADP(+) + n H(+)(out). The protein is NAD(P)H-quinone oxidoreductase chain 4, chloroplastic of Helianthus annuus (Common sunflower).